We begin with the raw amino-acid sequence, 464 residues long: Anthocyanidin 3-O-galactosyltransferase 3GT1 (464 aa).

An anthocyanidin contacts are provided by S19 and H21. Catalysis depends on H21, which acts as the Proton acceptor. Residue N38 is glycosylated (N-linked (GlcNAc...) asparagine). Catalysis depends on D121, which acts as the Charge relay. H152 serves as a coordination point for an anthocyanidin. Residues A342, Q344, H359, W362, N363, S364, and E367 each coordinate UDP-alpha-D-glucose. G382 provides a ligand contact to an anthocyanidin. A UDP-alpha-D-glucose-binding site is contributed by D383.

This sequence belongs to the UDP-glycosyltransferase family. In terms of assembly, monomer. As to expression, mostly expressed in leaves and flowers and, to a lower extent, in roots. In flowers, mainly observed in petals, toruses and scapes, and at lower levels in pistils and stamens.

The catalysed reaction is cyanidin + UDP-alpha-D-galactose = cyanidin 3-O-beta-D-galactoside + UDP + H(+). The enzyme catalyses cyanidin + UDP-alpha-D-glucose = cyanidin 3-O-beta-D-glucoside + UDP + H(+). It carries out the reaction delphinidin + UDP-alpha-D-glucose = delphinidin 3-O-beta-D-glucoside + UDP. It catalyses the reaction malvidin + UDP-alpha-D-glucose = malvidin 3-O-beta-D-glucoside + UDP. The catalysed reaction is delphinidin + UDP-alpha-D-galactose = delphinidin 3-O-beta-D-galactoside + UDP + H(+). The enzyme catalyses pelargonidin + UDP-alpha-D-galactose = pelargonidin 3-O-beta-D-galactoside betaine + UDP. It carries out the reaction peonidin + UDP-alpha-D-galactose = peonidin 3-O-beta-D-galactoside + UDP. It catalyses the reaction malvidin + UDP-alpha-D-galactose = malvidin 3-O-beta-D-galactoside + UDP + H(+). The catalysed reaction is petunidin + UDP-alpha-D-galactose = petunidin 3-O-beta-D-galactoside + UDP. The enzyme catalyses an anthocyanidin + UDP-alpha-D-glucose + H(+) = an anthocyanidin 3-O-beta-D-glucoside + UDP. It carries out the reaction an anthocyanidin + UDP-alpha-D-galactose = an anthocyanidin 3-O-beta-D-galactoside + UDP. It participates in pigment biosynthesis; anthocyanin biosynthesis. Flavonoid 3-O-glycosyltransferase involved in the biosynthesis of anthocyanins conferring flower red/pink colors, mainly anthocyanidin 3-O-glycosides. Catalyzes the addition of UDP-sugar to the 3-OH of anthocyanidin, with a preference for UDP-galactose (UDP-Gal) as sugar donor and cyanidin as substrate; able to use delphinidin, pelargonidin, peonidin, malvidin and petunidin as substrates in the presence of UDP-Gal. Can also use UDP-glucose (UDP-Glu) as sugar donor with delphinidin, cyanidin and malvidin as substrates, but not active on pelargonidin, peonidin and petunidin. This is Anthocyanidin 3-O-galactosyltransferase 3GT1 from Rhododendron delavayi (Rhododendron).